The sequence spans 496 residues: Angiopoietin-2 (496 aa).

The signal sequence occupies residues 1-18; that stretch reads MWQLVFFALSCDLVLAAA. 6 N-linked (GlcNAc...) asparagine glycosylation sites follow: N89, N119, N133, N151, N240, and N304. Residues 130–255 adopt a coiled-coil conformation; sequence NLLNQTAEQT…KQQHDLMETV (126 aa). One can recognise a Fibrinogen C-terminal domain in the interval 275 to 495; it reads KEEQIIFRDC…ATTMMIRPAD (221 aa). An intrachain disulfide couples C284 to C313. Ca(2+) contacts are provided by D429, D431, C433, and C435. Cystine bridges form between C433–C435 and C437–C450.

As to quaternary structure, interacts with TEK/TIE2, competing for the same binding site as ANGPT1. Interacts with ITGA5. Interacts with SVEP1/polydom. Interacts with THBD; this interaction significantly inhibits the generation of activated PC and TAFIa/CPB2 by the thrombin/thrombomodulin complex.

The protein localises to the secreted. Binds to TEK/TIE2, competing for the ANGPT1 binding site, and modulating ANGPT1 signaling. Can induce tyrosine phosphorylation of TEK/TIE2 in the absence of ANGPT1. In the absence of angiogenic inducers, such as VEGF, ANGPT2-mediated loosening of cell-matrix contacts may induce endothelial cell apoptosis with consequent vascular regression. In concert with VEGF, it may facilitate endothelial cell migration and proliferation, thus serving as a permissive angiogenic signal. Involved in the regulation of lymphangiogenesis. The sequence is that of Angiopoietin-2 (ANGPT2) from Sus scrofa (Pig).